Consider the following 306-residue polypeptide: MNPPADDMPARCHSYLQQFEAYMQSERQLSAHTVRNYLYELQRGRELLPEGIDLLNVGREHWQQVLAKLHRKGLSPRSLSLWLSAVKQWGEFLLRAGAIELNPAKGLSAPKQAKPLPKNIDVDSLTHLLEIDGNDPLTLRDKAIMELFYSSGLRLAELAALDLSSVQYDQREVRVLGKGNKERIVPVGRYAIDAISAWLECRRQIPCEDNALFVTEKGKRLSHRSIQARMSKWGQEQALSMRVHPHKLRHSFATHMLESSADLRAVQELLGHENLSTTQIYTSLDFQHLAKVYDNAHPRAKKQQDK.

The 85-residue stretch at 10-94 folds into the Core-binding (CB) domain; the sequence is ARCHSYLQQF…AVKQWGEFLL (85 aa). Positions 115–294 constitute a Tyr recombinase domain; sequence PLPKNIDVDS…DFQHLAKVYD (180 aa). Residues arginine 154, lysine 178, histidine 246, arginine 249, and histidine 272 contribute to the active site. Tyrosine 281 serves as the catalytic O-(3'-phospho-DNA)-tyrosine intermediate.

This sequence belongs to the 'phage' integrase family. XerC subfamily. In terms of assembly, forms a cyclic heterotetrameric complex composed of two molecules of XerC and two molecules of XerD.

It is found in the cytoplasm. Its function is as follows. Site-specific tyrosine recombinase, which acts by catalyzing the cutting and rejoining of the recombining DNA molecules. The XerC-XerD complex is essential to convert dimers of the bacterial chromosome into monomers to permit their segregation at cell division. It also contributes to the segregational stability of plasmids. This Shewanella oneidensis (strain ATCC 700550 / JCM 31522 / CIP 106686 / LMG 19005 / NCIMB 14063 / MR-1) protein is Tyrosine recombinase XerC.